The sequence spans 71 residues: Disintegrin simusmin (71 aa).

The Disintegrin domain maps to 1–71 (AGEECDCGSP…SADCPRNPFH (71 aa)). Disulfide bonds link C5/C20, C7/C15, C14/C37, C28/C34, C33/C58, and C46/C65. Positions 50–52 (RGD) match the Cell attachment site motif.

It belongs to the venom metalloproteinase (M12B) family. P-II subfamily. P-IIa sub-subfamily. As to quaternary structure, monomer. Expressed by the venom gland.

It is found in the secreted. In terms of biological role, inhibits ADP- (IC(50)=56 nM) and collagen-induced (IC(50)=49 nM) aggregation of human platelets. In vitro, inhibits adhesion of endothelial cells to vitronectin, type-I collagen and, to a lower degree, fibronectin and laminin. The protein is Disintegrin simusmin of Crotalus simus (Central American rattlesnake).